The sequence spans 273 residues: MAAVKCKPTSPGRRHVVKVVNPELHKGKPFAPLLEKNSKSGGRNNNGRITTRHIGGGHKQAYRIVDFKRNKDGIPAVVERLEYDPNRSANIALVLYKDGERRYILAPKGLKAGDQIQSGVDAAIKPGNTLPMRNIPVGSTVHNVEMKPGKGGQLARSAGTYVQIVARDGAYVTLRLRSGEMRKVEADCRATLGEVGNAEHMLRVLGKAGAARWRGVRPTVRGTAMNPVDHPHGGGEGRNFGKHPVTPWGVQTKGKKTRSNKRTDKFIVRRRSK.

Disordered regions lie at residues 28 to 53 (KPFA…TTRH) and 221 to 273 (RGTA…RRSK). Low complexity predominate over residues 39-48 (KSGGRNNNGR). K242 carries the N6-acetyllysine modification.

The protein belongs to the universal ribosomal protein uL2 family. In terms of assembly, part of the 50S ribosomal subunit. Forms a bridge to the 30S subunit in the 70S ribosome.

Its function is as follows. One of the primary rRNA binding proteins. Required for association of the 30S and 50S subunits to form the 70S ribosome, for tRNA binding and peptide bond formation. It has been suggested to have peptidyltransferase activity; this is somewhat controversial. Makes several contacts with the 16S rRNA in the 70S ribosome. The protein is Large ribosomal subunit protein uL2 of Shigella dysenteriae serotype 1 (strain Sd197).